The primary structure comprises 395 residues: 8-amino-3,8-dideoxy-alpha-D-manno-octulosonate transaminase (395 aa).

Lysine 186 is modified (N6-(pyridoxal phosphate)lysine).

It belongs to the DegT/DnrJ/EryC1 family. Requires pyridoxal 5'-phosphate as cofactor.

It catalyses the reaction 8-amino-3,8-dideoxy-alpha-D-manno-octulosonate + 2-oxoglutarate = 3,8-dideoxy-8-oxo-alpha-D-manno-octulosonate + L-glutamate. It functions in the pathway bacterial outer membrane biogenesis; lipopolysaccharide biosynthesis. Its function is as follows. Catalyzes the second (last) step of the biosynthesis of Kdo8N (8-amino-3,8-dideoxy-D-manno-octulosonate) from Kdo (3-deoxy-D-manno-octulosonate). This is 8-amino-3,8-dideoxy-alpha-D-manno-octulosonate transaminase from Shewanella oneidensis (strain ATCC 700550 / JCM 31522 / CIP 106686 / LMG 19005 / NCIMB 14063 / MR-1).